The primary structure comprises 352 residues: Protein RecA (352 aa).

65 to 72 (GPESSGKT) serves as a coordination point for ATP. A disordered region spans residues 333–352 (VKAAANREPVEEVEEADTDI). Residues 343–352 (EEVEEADTDI) show a composition bias toward acidic residues.

The protein belongs to the RecA family.

The protein localises to the cytoplasm. Its function is as follows. Can catalyze the hydrolysis of ATP in the presence of single-stranded DNA, the ATP-dependent uptake of single-stranded DNA by duplex DNA, and the ATP-dependent hybridization of homologous single-stranded DNAs. It interacts with LexA causing its activation and leading to its autocatalytic cleavage. In Pseudomonas fluorescens, this protein is Protein RecA.